A 503-amino-acid polypeptide reads, in one-letter code: Anhydrotetracycline monooxygenase (503 aa).

The protein belongs to the PheA/TfdB FAD monooxygenase family. FAD serves as cofactor.

The catalysed reaction is anhydrotetracycline + NADPH + O2 + H(+) = 5a,11a-dehydrotetracycline + NADP(+) + H2O. Its pathway is antibiotic biosynthesis; oxytetracycline biosynthesis. Functionally, catalyzes hydroxylation of the anthracycline structure at position C-6 during the biosynthesis of oxytetracyline. This chain is Anhydrotetracycline monooxygenase, found in Streptomyces rimosus.